The chain runs to 245 residues: 2,3-bisphosphoglycerate-dependent phosphoglycerate mutase (245 aa).

Substrate contacts are provided by residues 9–16, 22–23, R61, 88–91, K99, 115–116, and 181–182; these read RHGESEWN, TG, ERHY, RR, and GN. H10 serves as the catalytic Tele-phosphohistidine intermediate. The active-site Proton donor/acceptor is E88.

It belongs to the phosphoglycerate mutase family. BPG-dependent PGAM subfamily.

It catalyses the reaction (2R)-2-phosphoglycerate = (2R)-3-phosphoglycerate. The protein operates within carbohydrate degradation; glycolysis; pyruvate from D-glyceraldehyde 3-phosphate: step 3/5. In terms of biological role, catalyzes the interconversion of 2-phosphoglycerate and 3-phosphoglycerate. The sequence is that of 2,3-bisphosphoglycerate-dependent phosphoglycerate mutase from Nocardia farcinica (strain IFM 10152).